The sequence spans 222 residues: MAIMRVNPTRMELTRLKKRLQVARRGHKLLKDKLDELMKQFLDLVRKNKELREKVEEMLMKAHQDFLIARAVMSSEGLEAALMLPKQSISLDVSTQNIMSVEVPVLKFTTSSSDESDIYPYGFASTSGELDGAILTLSKVLPYMLELAQMEKSSQLLAQEIEKTRRRVNALEYVMIPQLTETIKYISMKLDENERGNITRLMKVKDMMLEQAHNFKEKLNEA.

This sequence belongs to the V-ATPase D subunit family.

In terms of biological role, produces ATP from ADP in the presence of a proton gradient across the membrane. The chain is V-type ATP synthase subunit D from Acetivibrio thermocellus (strain ATCC 27405 / DSM 1237 / JCM 9322 / NBRC 103400 / NCIMB 10682 / NRRL B-4536 / VPI 7372) (Clostridium thermocellum).